The sequence spans 287 residues: Phosphatidylglycerol--prolipoprotein diacylglyceryl transferase (287 aa).

The next 4 helical transmembrane spans lie at 26-46, 71-91, 106-126, and 132-152; these read VAIR…WWLA, FLVW…ILFY, IWRG…AMIV, and GLPV…GLFF. A 1,2-diacyl-sn-glycero-3-phospho-(1'-sn-glycerol) is bound at residue arginine 154. 3 consecutive transmembrane segments (helical) span residues 187–207, 217–237, and 251–271; these read SQLY…QVLA, GVIS…VEFF, and WLTM…WAIW.

This sequence belongs to the Lgt family.

The protein resides in the cell inner membrane. It carries out the reaction L-cysteinyl-[prolipoprotein] + a 1,2-diacyl-sn-glycero-3-phospho-(1'-sn-glycerol) = an S-1,2-diacyl-sn-glyceryl-L-cysteinyl-[prolipoprotein] + sn-glycerol 1-phosphate + H(+). The protein operates within protein modification; lipoprotein biosynthesis (diacylglyceryl transfer). In terms of biological role, catalyzes the transfer of the diacylglyceryl group from phosphatidylglycerol to the sulfhydryl group of the N-terminal cysteine of a prolipoprotein, the first step in the formation of mature lipoproteins. The chain is Phosphatidylglycerol--prolipoprotein diacylglyceryl transferase from Allorhizobium ampelinum (strain ATCC BAA-846 / DSM 112012 / S4) (Agrobacterium vitis (strain S4)).